The following is a 684-amino-acid chain: NAD(P)H-quinone oxidoreductase subunit 5, chloroplastic (684 aa).

14 helical membrane-spanning segments follow: residues 16–36 (WAFP…XLSI), 65–85 (IDPL…MVLI), 96–116 (GYLI…GLVT), 123–143 (IYIF…FWFT), 161–181 (GDFG…SFEF), 206–226 (AALL…HVWL), 234–254 (TPIS…FLVA), 256–276 (LLPL…IGII), 303–323 (LXYM…FHLI), 330–350 (ALLF…VGYS), 372–392 (TSFL…CFWS), 401–421 (WLYS…TAFY), 524–544 (LFPL…GIPF), and 583–603 (IFSV…YKPI).

It belongs to the complex I subunit 5 family. NDH is composed of at least 16 different subunits, 5 of which are encoded in the nucleus.

The protein localises to the plastid. The protein resides in the chloroplast thylakoid membrane. It carries out the reaction a plastoquinone + NADH + (n+1) H(+)(in) = a plastoquinol + NAD(+) + n H(+)(out). It catalyses the reaction a plastoquinone + NADPH + (n+1) H(+)(in) = a plastoquinol + NADP(+) + n H(+)(out). NDH shuttles electrons from NAD(P)H:plastoquinone, via FMN and iron-sulfur (Fe-S) centers, to quinones in the photosynthetic chain and possibly in a chloroplast respiratory chain. The immediate electron acceptor for the enzyme in this species is believed to be plastoquinone. Couples the redox reaction to proton translocation, and thus conserves the redox energy in a proton gradient. This is NAD(P)H-quinone oxidoreductase subunit 5, chloroplastic (ndhF) from Sesamum indicum (Oriental sesame).